Here is a 254-residue protein sequence, read N- to C-terminus: Alcohol dehydrogenase (254 aa).

10-33 contacts NAD(+); that stretch reads FVAGLGGIGLDTSREIVKSGPKNL. Serine 138 is a binding site for substrate. The active-site Proton acceptor is the tyrosine 151.

This sequence belongs to the short-chain dehydrogenases/reductases (SDR) family. Homodimer.

It catalyses the reaction a primary alcohol + NAD(+) = an aldehyde + NADH + H(+). The enzyme catalyses a secondary alcohol + NAD(+) = a ketone + NADH + H(+). The protein is Alcohol dehydrogenase (Adh) of Drosophila borealis (Fruit fly).